We begin with the raw amino-acid sequence, 735 residues long: Protein-associating with the carboxyl-terminal domain of ezrin (735 aa).

Residue glycine 2 is the site of N-myristoyl glycine attachment. Residues 2 to 245 (GSENSALKSY…LSTLLSHDFF (244 aa)) form the Protein kinase domain. 4 HEAT repeats span residues 194–249 (FGAL…RNDF), 285–323 (LIASRLVPLLLNQLVFAEPVAVKSFLPYLLGPKKENAPG), 333–370 (LFQSRVIPVLLRLFEVHEEHVRMVLLSHIEAYVEHFTQ), and 372–409 (QLKKVILPQVLLGLRDTSNSIVAITLRSLAVLVSLLGP). A Phosphoserine modification is found at serine 439. Disordered regions lie at residues 505–545 (LSDV…ASIH) and 604–648 (VPLT…GLGL). Over residues 528–538 (WPDWSEPEEPE) the composition is skewed to acidic residues. The tract at residues 547 to 735 (WPREPCDVAE…EELAWEDNNW (189 aa)) is interaction with EZR. Serine 701 carries the phosphoserine modification.

It belongs to the protein kinase superfamily. As to quaternary structure, interacts with EZR/VIL2 C-terminal domain. May be myristoylated; myristoylation may target it to Golgi compartment.

It is found in the cytoplasm. The protein resides in the golgi apparatus. It localises to the cell projection. The protein localises to the lamellipodium. May play a role in regulating cell adhesion/migration complexes in migrating cells. The protein is Protein-associating with the carboxyl-terminal domain of ezrin (Scyl3) of Mus musculus (Mouse).